Reading from the N-terminus, the 248-residue chain is tRNA (guanine-N(1)-)-methyltransferase (248 aa).

Residues Gly-113 and 133-138 (VGDYVL) contribute to the S-adenosyl-L-methionine site.

It belongs to the RNA methyltransferase TrmD family. In terms of assembly, homodimer.

It is found in the cytoplasm. It catalyses the reaction guanosine(37) in tRNA + S-adenosyl-L-methionine = N(1)-methylguanosine(37) in tRNA + S-adenosyl-L-homocysteine + H(+). Functionally, specifically methylates guanosine-37 in various tRNAs. This is tRNA (guanine-N(1)-)-methyltransferase from Shewanella oneidensis (strain ATCC 700550 / JCM 31522 / CIP 106686 / LMG 19005 / NCIMB 14063 / MR-1).